A 435-amino-acid polypeptide reads, in one-letter code: ATP-dependent protease ATPase subunit HslU (435 aa).

ATP-binding positions include Ile18, 60-65, Asp248, Glu313, and Arg385; that span reads GVGKTE.

Belongs to the ClpX chaperone family. HslU subfamily. In terms of assembly, a double ring-shaped homohexamer of HslV is capped on each side by a ring-shaped HslU homohexamer. The assembly of the HslU/HslV complex is dependent on binding of ATP.

The protein resides in the cytoplasm. In terms of biological role, ATPase subunit of a proteasome-like degradation complex; this subunit has chaperone activity. The binding of ATP and its subsequent hydrolysis by HslU are essential for unfolding of protein substrates subsequently hydrolyzed by HslV. HslU recognizes the N-terminal part of its protein substrates and unfolds these before they are guided to HslV for hydrolysis. The sequence is that of ATP-dependent protease ATPase subunit HslU from Ruegeria pomeroyi (strain ATCC 700808 / DSM 15171 / DSS-3) (Silicibacter pomeroyi).